A 218-amino-acid polypeptide reads, in one-letter code: Small ribosomal subunit protein uS7 (218 aa).

It belongs to the universal ribosomal protein uS7 family. In terms of assembly, part of the 30S ribosomal subunit.

One of the primary rRNA binding proteins, it binds directly to 16S rRNA where it nucleates assembly of the head domain of the 30S subunit. Is located at the subunit interface close to the decoding center. The protein is Small ribosomal subunit protein uS7 (rps7) of Pyrococcus horikoshii (strain ATCC 700860 / DSM 12428 / JCM 9974 / NBRC 100139 / OT-3).